Here is a 400-residue protein sequence, read N- to C-terminus: CinA-like protein (400 aa).

It belongs to the CinA family.

The polypeptide is CinA-like protein (Escherichia coli O9:H4 (strain HS)).